The sequence spans 217 residues: Peptide methionine sulfoxide reductase MsrA (217 aa).

C56 is an active-site residue.

It belongs to the MsrA Met sulfoxide reductase family.

It carries out the reaction L-methionyl-[protein] + [thioredoxin]-disulfide + H2O = L-methionyl-(S)-S-oxide-[protein] + [thioredoxin]-dithiol. The catalysed reaction is [thioredoxin]-disulfide + L-methionine + H2O = L-methionine (S)-S-oxide + [thioredoxin]-dithiol. Functionally, has an important function as a repair enzyme for proteins that have been inactivated by oxidation. Catalyzes the reversible oxidation-reduction of methionine sulfoxide in proteins to methionine. In Corynebacterium glutamicum (strain ATCC 13032 / DSM 20300 / JCM 1318 / BCRC 11384 / CCUG 27702 / LMG 3730 / NBRC 12168 / NCIMB 10025 / NRRL B-2784 / 534), this protein is Peptide methionine sulfoxide reductase MsrA.